The chain runs to 98 residues: Cystatin-B (98 aa).

M1 carries the post-translational modification N-acetylmethionine. Residues 46–50 carry the Secondary area of contact motif; it reads QVVAG.

Belongs to the cystatin family. In terms of assembly, able to form dimers stabilized by noncovalent forces.

The protein resides in the cytoplasm. It localises to the nucleus. This is an intracellular thiol proteinase inhibitor. Tightly binding reversible inhibitor of cathepsins L, H and B. In Macaca fuscata fuscata (Japanese macaque), this protein is Cystatin-B (CSTB).